Here is a 146-residue protein sequence, read N- to C-terminus: DNA protection during starvation protein 2 (146 aa).

Residues histidine 27, aspartate 54, and glutamate 58 each contribute to the Fe cation site.

This sequence belongs to the Dps family. As to quaternary structure, the 12 subunits form a hollow sphere into which the mineral iron core of up to 500 Fe(3+) can be deposited. Homododecamer.

Its subcellular location is the cytoplasm. The enzyme catalyses 2 Fe(2+) + H2O2 + 2 H(+) = 2 Fe(3+) + 2 H2O. Protects DNA from oxidative damage by sequestering intracellular Fe(2+) ion and storing it in the form of Fe(3+) oxyhydroxide mineral. One hydrogen peroxide oxidizes two Fe(2+) ions, which prevents hydroxyl radical production by the Fenton reaction. It is capable of binding and sequestering Fe(2+) ion. Does not bind DNA. This chain is DNA protection during starvation protein 2 (dps2), found in Bacillus anthracis.